The sequence spans 415 residues: Squalene synthase 3 (415 aa).

Transmembrane regions (helical) follow at residues 281 to 301 (AIFR…ALCY) and 392 to 412 (LIII…SNLP).

Belongs to the phytoene/squalene synthase family. It depends on Mg(2+) as a cofactor. The cofactor is Mn(2+).

Its subcellular location is the endoplasmic reticulum membrane. It carries out the reaction 2 (2E,6E)-farnesyl diphosphate + NADH + H(+) = squalene + 2 diphosphate + NAD(+). The catalysed reaction is 2 (2E,6E)-farnesyl diphosphate + NADPH + H(+) = squalene + 2 diphosphate + NADP(+). Its pathway is terpene metabolism; lanosterol biosynthesis; lanosterol from farnesyl diphosphate: step 1/3. In terms of biological role, component of the triterpene saponins (e.g. ginsenosides or panaxosides) and phytosterols biosynthetic pathways. Catalyzes the biosynthesis of squalene. The protein is Squalene synthase 3 of Panax ginseng (Korean ginseng).